Consider the following 320-residue polypeptide: Pyrroline-5-carboxylate reductase 2 (320 aa).

Serine 2 carries the post-translational modification N-acetylserine. NADP(+)-binding positions include 6 to 11 and serine 34; that span reads IGAGQL. Alanine 8, glutamine 10, leucine 11, serine 34, glutamate 36, asparagine 56, valine 70, lysine 71, and alanine 97 together coordinate NADPH. NADP(+) contacts are provided by residues asparagine 56, 69–72, and 95–97; these read AVKP and CAA. Position 164 (glutamate 164) interacts with L-proline. Asparagine 230 provides a ligand contact to NADPH. L-proline is bound by residues alanine 237 and threonine 238. Residues 295–305 are compositionally biased toward low complexity; the sequence is PTVSTLTPSSP. The interval 295–320 is disordered; the sequence is PTVSTLTPSSPGKLLTRSLALGGKKD. Serine 304 is modified (phosphoserine).

This sequence belongs to the pyrroline-5-carboxylate reductase family. As to quaternary structure, homodecamer; composed of 5 homodimers. Interacts with LTO1.

It is found in the cytoplasm. The protein resides in the mitochondrion. The catalysed reaction is L-proline + NADP(+) = (S)-1-pyrroline-5-carboxylate + NADPH + 2 H(+). It catalyses the reaction L-proline + NAD(+) = (S)-1-pyrroline-5-carboxylate + NADH + 2 H(+). Its pathway is amino-acid biosynthesis; L-proline biosynthesis; L-proline from L-glutamate 5-semialdehyde: step 1/1. Oxidoreductase that catalyzes the last step in proline biosynthesis, which corresponds to the reduction of pyrroline-5-carboxylate to L-proline using NAD(P)H. At physiologic concentrations, has higher specific activity in the presence of NADH. Involved in cellular response to oxidative stress. In some cell types, such as erythrocytes, its primary function may be the generation of NADP(+). The protein is Pyrroline-5-carboxylate reductase 2 (PYCR2) of Macaca fascicularis (Crab-eating macaque).